The primary structure comprises 379 residues: Cytochrome b (379 aa).

Helical transmembrane passes span 34–54 (FGSL…LLAM), 78–99 (WFIR…YLHI), 114–134 (WNTG…GYVL), and 179–199 (FFAL…VHLT). Heme b-binding residues include His-84 and His-98. Heme b-binding residues include His-183 and His-197. An a ubiquinone-binding site is contributed by His-202. Helical transmembrane passes span 227–247 (LKDI…AFFS), 289–309 (LGGV…PLLH), 321–341 (LSQL…WIGS), and 348–368 (FIII…VLFP).

Belongs to the cytochrome b family. The cytochrome bc1 complex contains 11 subunits: 3 respiratory subunits (MT-CYB, CYC1 and UQCRFS1), 2 core proteins (UQCRC1 and UQCRC2) and 6 low-molecular weight proteins (UQCRH/QCR6, UQCRB/QCR7, UQCRQ/QCR8, UQCR10/QCR9, UQCR11/QCR10 and a cleavage product of UQCRFS1). This cytochrome bc1 complex then forms a dimer. Requires heme b as cofactor.

It localises to the mitochondrion inner membrane. Functionally, component of the ubiquinol-cytochrome c reductase complex (complex III or cytochrome b-c1 complex) that is part of the mitochondrial respiratory chain. The b-c1 complex mediates electron transfer from ubiquinol to cytochrome c. Contributes to the generation of a proton gradient across the mitochondrial membrane that is then used for ATP synthesis. The polypeptide is Cytochrome b (MT-CYB) (Struthio camelus (Common ostrich)).